The following is a 338-amino-acid chain: CRISPR-associated endonuclease Cas1 (338 aa).

Residues Glu165, His230, and Glu245 each coordinate Mn(2+).

Belongs to the CRISPR-associated endonuclease Cas1 family. Homodimer, forms a heterotetramer with a Cas2 homodimer. Requires Mg(2+) as cofactor. Mn(2+) serves as cofactor.

Functionally, CRISPR (clustered regularly interspaced short palindromic repeat), is an adaptive immune system that provides protection against mobile genetic elements (viruses, transposable elements and conjugative plasmids). CRISPR clusters contain spacers, sequences complementary to antecedent mobile elements, and target invading nucleic acids. CRISPR clusters are transcribed and processed into CRISPR RNA (crRNA). Acts as a dsDNA endonuclease. Involved in the integration of spacer DNA into the CRISPR cassette. This chain is CRISPR-associated endonuclease Cas1, found in Fusobacterium nucleatum subsp. nucleatum (strain ATCC 25586 / DSM 15643 / BCRC 10681 / CIP 101130 / JCM 8532 / KCTC 2640 / LMG 13131 / VPI 4355).